The chain runs to 170 residues: Large ribosomal subunit protein uL6m (170 aa).

Belongs to the universal ribosomal protein uL6 family.

The protein localises to the mitochondrion. The polypeptide is Large ribosomal subunit protein uL6m (mrpl6) (Dictyostelium discoideum (Social amoeba)).